Here is a 354-residue protein sequence, read N- to C-terminus: DNA polymerase IV (354 aa).

A UmuC domain is found at 6-187; that stretch reads IIHVDCDCFY…LPVARLHGVG (182 aa). The Mg(2+) site is built by Asp-10 and Asp-105. Glu-106 is a catalytic residue.

It belongs to the DNA polymerase type-Y family. As to quaternary structure, monomer. It depends on Mg(2+) as a cofactor.

Its subcellular location is the cytoplasm. The enzyme catalyses DNA(n) + a 2'-deoxyribonucleoside 5'-triphosphate = DNA(n+1) + diphosphate. Its function is as follows. Poorly processive, error-prone DNA polymerase involved in untargeted mutagenesis. Copies undamaged DNA at stalled replication forks, which arise in vivo from mismatched or misaligned primer ends. These misaligned primers can be extended by PolIV. Exhibits no 3'-5' exonuclease (proofreading) activity. May be involved in translesional synthesis, in conjunction with the beta clamp from PolIII. This Pseudomonas putida (strain ATCC 700007 / DSM 6899 / JCM 31910 / BCRC 17059 / LMG 24140 / F1) protein is DNA polymerase IV.